Consider the following 488-residue polypeptide: Ribulose bisphosphate carboxylase large chain (488 aa).

The substrate site is built by asparagine 127 and threonine 177. Lysine 179 acts as the Proton acceptor in catalysis. Substrate is bound at residue lysine 181. Mg(2+) is bound by residues lysine 205, aspartate 207, and glutamate 208. Lysine 205 carries the post-translational modification N6-carboxylysine. Histidine 297 (proton acceptor) is an active-site residue. Residues arginine 298, histidine 330, and serine 382 each contribute to the substrate site.

It belongs to the RuBisCO large chain family. Type I subfamily. In terms of assembly, heterohexadecamer of 8 large chains and 8 small chains. The cofactor is Mg(2+).

It is found in the plastid. Its subcellular location is the chloroplast. The catalysed reaction is 2 (2R)-3-phosphoglycerate + 2 H(+) = D-ribulose 1,5-bisphosphate + CO2 + H2O. It catalyses the reaction D-ribulose 1,5-bisphosphate + O2 = 2-phosphoglycolate + (2R)-3-phosphoglycerate + 2 H(+). RuBisCO catalyzes two reactions: the carboxylation of D-ribulose 1,5-bisphosphate, the primary event in carbon dioxide fixation, as well as the oxidative fragmentation of the pentose substrate in the photorespiration process. Both reactions occur simultaneously and in competition at the same active site. This Pyropia dentata (Red alga) protein is Ribulose bisphosphate carboxylase large chain (rbcL).